The primary structure comprises 125 residues: Large ribosomal subunit protein bL12 (125 aa).

Belongs to the bacterial ribosomal protein bL12 family. As to quaternary structure, homodimer. Part of the ribosomal stalk of the 50S ribosomal subunit. Forms a multimeric L10(L12)X complex, where L10 forms an elongated spine to which 2 to 4 L12 dimers bind in a sequential fashion. Binds GTP-bound translation factors.

Forms part of the ribosomal stalk which helps the ribosome interact with GTP-bound translation factors. Is thus essential for accurate translation. The chain is Large ribosomal subunit protein bL12 from Thermoanaerobacter pseudethanolicus (strain ATCC 33223 / 39E) (Clostridium thermohydrosulfuricum).